Here is a 291-residue protein sequence, read N- to C-terminus: MKSGFVSIIGRTNAGKSTLINSLLEEKIALVSHKQNATRRKIKAIVIHEKNQIIFIDTPGLHESGATFNQLLVQSAIKSMEDCDVILFVASVFDSTKDYENFLSLNPQVSHIIALNKVDLTDNATLLKKLSEYAKFSEHFKAILPYSSKKKSYKKGLLDEIVKCLNEHEYFYDPEFLSVNSEKELYRDFILESIYENLSDELPYSSEVLINRTKDTPNLLILEANIITDTNSHKGMFIGKEGATLKRIGKDARFKISKLAQKKVLLKLFVTVKKNWQKDEEFLKKLLNDEN.

The 166-residue stretch at 2–167 folds into the Era-type G domain; that stretch reads KSGFVSIIGR…LDEIVKCLNE (166 aa). The interval 10 to 17 is G1; sequence GRTNAGKS. 10 to 17 is a binding site for GTP; sequence GRTNAGKS. Residues 36 to 40 form a G2 region; it reads NATRR. The G3 stretch occupies residues 57 to 60; it reads DTPG. GTP is bound by residues 57-61 and 116-119; these read DTPGL and NKVD. The G4 stretch occupies residues 116–119; the sequence is NKVD. The segment at 146–148 is G5; that stretch reads YSS. A KH type-2 domain is found at 186–274; the sequence is YRDFILESIY…LLKLFVTVKK (89 aa).

This sequence belongs to the TRAFAC class TrmE-Era-EngA-EngB-Septin-like GTPase superfamily. Era GTPase family. In terms of assembly, monomer.

It is found in the cytoplasm. The protein resides in the cell inner membrane. An essential GTPase that binds both GDP and GTP, with rapid nucleotide exchange. Plays a role in 16S rRNA processing and 30S ribosomal subunit biogenesis and possibly also in cell cycle regulation and energy metabolism. The chain is GTPase Era from Campylobacter jejuni subsp. doylei (strain ATCC BAA-1458 / RM4099 / 269.97).